The following is a 157-amino-acid chain: RNA pyrophosphohydrolase (157 aa).

A Nudix hydrolase domain is found at 6–149 (SYRPNVAAVI…KRKVYRRVID (144 aa)). The short motif at 43 to 64 (GGIDEGETPEDALYRELLEEIG) is the Nudix box element.

Belongs to the Nudix hydrolase family. RppH subfamily. Requires a divalent metal cation as cofactor.

Functionally, accelerates the degradation of transcripts by removing pyrophosphate from the 5'-end of triphosphorylated RNA, leading to a more labile monophosphorylated state that can stimulate subsequent ribonuclease cleavage. The polypeptide is RNA pyrophosphohydrolase (Sulfurovum sp. (strain NBC37-1)).